Here is a 2531-residue protein sequence, read N- to C-terminus: Mediator of RNA polymerase II transcription subunit 12 (2531 aa).

4 disordered regions span residues 1 to 41 (MLSM…VKHG), 204 to 283 (QNHD…GSVM), 584 to 604 (VSRR…PKQD), and 742 to 762 (TTAT…THGF). The segment covering 210 to 247 (SSNGTTSGSLTAAGNGPASNGSTGTSSINSVTGSSAST) has biased composition (low complexity). The segment covering 586-604 (RRREEDQVEPRPPYEPKQD) has biased composition (basic and acidic residues). T745 carries the post-translational modification Phosphothreonine. Phosphoserine is present on residues S748 and S781. Residues 748 to 757 (SPPPPAPPPT) are compositionally biased toward pro residues. Residues 796–805 (EKGQQHEAPD) show a composition bias toward basic and acidic residues. The tract at residues 796-824 (EKGQQHEAPDSPKIGPPGDGETNPGGSIS) is disordered. Residues S806 and S1356 each carry the phosphoserine modification. T1360 carries the post-translational modification Phosphothreonine. Polar residues-rich tracts occupy residues 1585–1595 (VSKSDCNSSGS) and 1901–1910 (TPSSVDQSPS). Disordered regions lie at residues 1585 to 1608 (VSKS…CHSS), 1898 to 2092 (KADT…NQYA), 2114 to 2218 (QALS…GMAP), and 2469 to 2508 (MGGG…QQQT). Positions 1919–1933 (GRGKGTTTRKRKPKN) are enriched in basic residues. Low complexity-rich tracts occupy residues 1938-2038 (PVVN…QQLN) and 2045-2055 (QPNPQMNFMQQ). A compositionally biased stretch (gly residues) spans 2056 to 2066 (GPGGGGAGPQG). Low complexity-rich tracts occupy residues 2067 to 2080 (MPGQ…APQQ), 2121 to 2132 (RQRQPFQQQAQQ), and 2139 to 2205 (NPMQ…QQQQ). Over residues 2469–2496 (MGGGAGGGMGAGPQQGGGAVGGGAGGGM) the composition is skewed to gly residues. Low complexity predominate over residues 2497 to 2507 (VPQQQSMNQQQ).

This sequence belongs to the Mediator complex subunit 12 family. Component of the Cdk8 module of the Mediator complex, composed of CycC, Cdk8, kto and skd.

Its subcellular location is the nucleus. Its function is as follows. Component of the Mediator complex, a coactivator involved in regulated gene transcription of nearly all RNA polymerase II-dependent genes. Mediator functions as a bridge to convey information from gene-specific regulatory proteins to the basal RNA polymerase II transcription machinery. Mediator is recruited to promoters by direct interactions with regulatory proteins and serves as a scaffold for the assembly of a functional preinitiation complex with RNA polymerase II and the general transcription factors. Required for leg and eye development and macrochaete specification or differentiation. The sequence is that of Mediator of RNA polymerase II transcription subunit 12 (kto) from Drosophila melanogaster (Fruit fly).